A 285-amino-acid polypeptide reads, in one-letter code: ATP synthase gamma chain (285 aa).

This sequence belongs to the ATPase gamma chain family. F-type ATPases have 2 components, CF(1) - the catalytic core - and CF(0) - the membrane proton channel. CF(1) has five subunits: alpha(3), beta(3), gamma(1), delta(1), epsilon(1). CF(0) has three main subunits: a, b and c.

It is found in the cell membrane. Its function is as follows. Produces ATP from ADP in the presence of a proton gradient across the membrane. The gamma chain is believed to be important in regulating ATPase activity and the flow of protons through the CF(0) complex. This chain is ATP synthase gamma chain, found in Dehalococcoides mccartyi (strain ATCC BAA-2100 / JCM 16839 / KCTC 5957 / BAV1).